The following is a 350-amino-acid chain: tRNA uridine(34) hydroxylase (350 aa).

Positions 146–240 constitute a Rhodanese domain; it reads DDPDALFIDM…YARKAREQGL (95 aa). The Cysteine persulfide intermediate role is filled by Cys200.

The protein belongs to the TrhO family.

The catalysed reaction is uridine(34) in tRNA + AH2 + O2 = 5-hydroxyuridine(34) in tRNA + A + H2O. Catalyzes oxygen-dependent 5-hydroxyuridine (ho5U) modification at position 34 in tRNAs, the first step in 5-carboxymethoxyuridine (cmo5U) biosynthesis. May be part of an alternate pathway, which is able to bypass cmo5U biogenesis in a subset of tRNAs under aerobic conditions. The protein is tRNA uridine(34) hydroxylase of Escherichia coli O127:H6 (strain E2348/69 / EPEC).